Reading from the N-terminus, the 78-residue chain is Large ribosomal subunit protein bL28 (78 aa).

Residues 1 to 22 (MAKVCQVTGKRPVTGHNVSHAK) form a disordered region.

Belongs to the bacterial ribosomal protein bL28 family.

This is Large ribosomal subunit protein bL28 from Teredinibacter turnerae (strain ATCC 39867 / T7901).